Here is a 334-residue protein sequence, read N- to C-terminus: Ornithine carbamoyltransferase (334 aa).

Residues 56–59, Q83, R107, and 134–137 contribute to the carbamoyl phosphate site; these read STRT and HPTQ. L-ornithine is bound by residues N168, D232, and 236–237; that span reads SM. Residues 274–275 and R320 each bind carbamoyl phosphate; that span reads CL.

The protein belongs to the aspartate/ornithine carbamoyltransferase superfamily. OTCase family.

It is found in the cytoplasm. The enzyme catalyses carbamoyl phosphate + L-ornithine = L-citrulline + phosphate + H(+). It functions in the pathway amino-acid biosynthesis; L-arginine biosynthesis; L-arginine from L-ornithine and carbamoyl phosphate: step 1/3. Functionally, reversibly catalyzes the transfer of the carbamoyl group from carbamoyl phosphate (CP) to the N(epsilon) atom of ornithine (ORN) to produce L-citrulline. The chain is Ornithine carbamoyltransferase from Shigella boydii serotype 4 (strain Sb227).